We begin with the raw amino-acid sequence, 699 residues long: Polyribonucleotide nucleotidyltransferase (699 aa).

Positions 484 and 490 each coordinate Mg(2+). One can recognise a KH domain in the interval 551–610 (PRITTIQVKPDQVRTVIGPGGKNVRGIIEATGCAIDIEDDGRINIASADGDACKAAIKMI). An S1 motif domain is found at 620 to 688 (GKLYMATVKK…RQGKIKLSRK (69 aa)).

Belongs to the polyribonucleotide nucleotidyltransferase family. The cofactor is Mg(2+).

The protein localises to the cytoplasm. The enzyme catalyses RNA(n+1) + phosphate = RNA(n) + a ribonucleoside 5'-diphosphate. In terms of biological role, involved in mRNA degradation. Catalyzes the phosphorolysis of single-stranded polyribonucleotides processively in the 3'- to 5'-direction. The chain is Polyribonucleotide nucleotidyltransferase from Syntrophotalea carbinolica (strain DSM 2380 / NBRC 103641 / GraBd1) (Pelobacter carbinolicus).